We begin with the raw amino-acid sequence, 334 residues long: Ficolin-1 (334 aa).

The first 17 residues, 1 to 17 (MQWPTLWAFSGLLCLCP), serve as a signal peptide directing secretion. Positions 47-117 (SCPGFPGPPG…SLGEKELGDT (71 aa)) are disordered. The Collagen-like domain maps to 50 to 88 (GFPGPPGPKGEPGSPAGRGERGFQGSPGKMGPAGSKGEP). The 218-residue stretch at 117–334 (TLCQRGPRSC…KVAEMKIRAS (218 aa)) folds into the Fibrinogen C-terminal domain. Intrachain disulfides connect cysteine 119–cysteine 147 and cysteine 126–cysteine 154. An a domain; contributes to trimerization region spans residues 123–162 (PRSCKDLLTRGIFLTGWYTIHLPDCRPLTVLCDMDVDGGG). Residues 163 to 251 (WTVFQRRVDG…LTLGQFLEGT (89 aa)) form a b domain; contributes to trimerization region. Asparagine 261 is a glycosylation site (N-linked (GlcNAc...) asparagine). Ca(2+)-binding residues include aspartate 270 and aspartate 272. Cysteines 278 and 291 form a disulfide. 290–292 (NCH) lines the a carbohydrate pocket. The interval 325-334 (KVAEMKIRAS) is p domain.

This sequence belongs to the ficolin lectin family. As to quaternary structure, homotrimer. Interacts with elastin/ELN. Interacts (via Fibrinogen C-terminal domain) with FFAR2. Interacts with CRP; may regulate monocyte activation by FCN1. As to expression, highly expressed in liver and spleen.

Its subcellular location is the secreted. It is found in the cell membrane. Extracellular lectin functioning as a pattern-recognition receptor in innate immunity. Binds the sugar moieties of pathogen-associated molecular patterns (PAMPs) displayed on microbes and activates the lectin pathway of the complement system. May also activate monocytes through a G protein-coupled receptor, FFAR2, inducing the secretion of interleukin-8/IL-8. Binds preferentially to 9-O-acetylated 2-6-linked sialic acid derivatives and to various glycans containing sialic acid engaged in a 2-3 linkage. In Mus musculus (Mouse), this protein is Ficolin-1 (Fcn1).